The following is a 222-amino-acid chain: Endonuclease V (222 aa).

Mg(2+)-binding residues include aspartate 43 and aspartate 109.

Belongs to the endonuclease V family. The cofactor is Mg(2+).

The protein resides in the cytoplasm. The catalysed reaction is Endonucleolytic cleavage at apurinic or apyrimidinic sites to products with a 5'-phosphate.. Functionally, DNA repair enzyme involved in the repair of deaminated bases. Selectively cleaves double-stranded DNA at the second phosphodiester bond 3' to a deoxyinosine leaving behind the intact lesion on the nicked DNA. The protein is Endonuclease V of Roseiflexus castenholzii (strain DSM 13941 / HLO8).